Reading from the N-terminus, the 150-residue chain is Multiprotein-bridging factor 1 (150 aa).

The disordered stretch occupies residues 32 to 59 (LNAARRSGNVVGTEKKYGSTNTKSNPEG). Positions 49-58 (GSTNTKSNPE) are enriched in polar residues. One can recognise an HTH cro/C1-type domain in the interval 85-139 (IQQARQEKKLTQKDLATKINEKPNVINDYEAGRAVPNQQLLGKLERALGVKLRGK). The segment at residues 96-115 (QKDLATKINEKPNVINDYEA) is a DNA-binding region (H-T-H motif).

This sequence belongs to the MBF1 family.

Its function is as follows. Transcriptional coactivator that stimulates GCN4-dependent transcriptional activity by bridging the DNA-binding region of GCN4 and TBP (SPT15), thereby recruiting TBP to GCN4-bound promoters. Involved in induction of the ribosome quality control (RQC) pathway; a pathway that degrades nascent peptide chains during problematic translation. Required to prevent stalled ribosomes from frameshifting. This Debaryomyces hansenii (strain ATCC 36239 / CBS 767 / BCRC 21394 / JCM 1990 / NBRC 0083 / IGC 2968) (Yeast) protein is Multiprotein-bridging factor 1 (MBF1).